A 576-amino-acid polypeptide reads, in one-letter code: MEQVDSSTELHLNRKDLAALAEDVVKEEVILESSSHHHHHHHHQLDTKVRMVTSSSNDNSGSGGASGGTSGAGGGNGGGGVVSVPVSLPIGSMITGTTFNVITPDQLPPHFKPMLCVDNNGYLSGSTVSMGNDLKTIVIQQQQTQPGGGGGGANNAGTNTTATNTIGLNHDGSGSNNSHDSLATLEHAAGGASGVGGGGGGTGGGSSGWSENPSTQHNEVFQIRCKTTCAELYRSKLGSGGRGRCVKYKDKWHTPSEFEHVCGRGSSKDWKRSIKYGGKSLQSLIDEGTLTPHATNCSCTVCCDDEAGESASGPVRLFTPYKRRKRNQTDLDMESGPKRKRNTHHSNNNNSNTNNNNTSGSGANNCVDVTAAVAAATASVVDENNMFLSEENITSKDEPWAALNDSLDTSTELVDQSQMGNTYERETFVVNINDGSSIAVLDTSQSMKNIEHVYCTMVKATNDFKRMLNDMKQSFERRIEVLQKERDAAVSAMRVQVHADIDDPNISGSLHGNEIISAKKCANCNREALAECSLCRKTPYCSEFCQRKDWNAHQVECTRNPQTTTQQVMLLIDDQS.

3 disordered regions span residues Val-52–Asn-76, Ala-189–Thr-215, and Glu-309–Gly-362. Gly residues-rich tracts occupy residues Gly-61–Asn-76 and Gly-191–Ser-207. The region spanning Ser-210–Thr-291 is the SAND domain. Positions Arg-324–Lys-340 match the Nuclear localization signal motif. Low complexity predominate over residues His-345–Gly-362. Cys-521, Cys-524, Cys-532, Cys-535, Cys-541, Cys-545, His-553, and Cys-557 together coordinate Zn(2+). Residues Cys-521 to Cys-557 form an MYND-type zinc finger.

It is found in the nucleus. Its function is as follows. Transcription factor that binds the homeotic Deformed (Dfd) response element. High affinity binding sites contain at least 1 TTCG motif surrounded by additional TCG sequences. May be involved in the selective action of Dfd on these sites without binding directly to the Dfd protein. Requirement of DEAF1 activity may be a common feature of enhancers targeted by Dfd. The protein is Deformed epidermal autoregulatory factor 1 (Deaf1) of Drosophila melanogaster (Fruit fly).